Consider the following 200-residue polypeptide: Orotate phosphoribosyltransferase (200 aa).

5-phospho-alpha-D-ribose 1-diphosphate-binding positions include Arg95, Lys99, His101, and 121 to 129; that span reads DDVATTGGS. Orotate is bound by residues Thr125 and Arg153.

It belongs to the purine/pyrimidine phosphoribosyltransferase family. PyrE subfamily. As to quaternary structure, homodimer. It depends on Mg(2+) as a cofactor.

It catalyses the reaction orotidine 5'-phosphate + diphosphate = orotate + 5-phospho-alpha-D-ribose 1-diphosphate. It participates in pyrimidine metabolism; UMP biosynthesis via de novo pathway; UMP from orotate: step 1/2. Catalyzes the transfer of a ribosyl phosphate group from 5-phosphoribose 1-diphosphate to orotate, leading to the formation of orotidine monophosphate (OMP). The sequence is that of Orotate phosphoribosyltransferase from Cenarchaeum symbiosum (strain A).